Here is a 130-residue protein sequence, read N- to C-terminus: S-adenosylmethionine decarboxylase proenzyme (130 aa).

Catalysis depends on Ser-64, which acts as the Schiff-base intermediate with substrate; via pyruvic acid. A Pyruvic acid (Ser); by autocatalysis modification is found at Ser-64. The Proton acceptor; for processing activity role is filled by His-69. Cys-84 serves as the catalytic Proton donor; for catalytic activity.

The protein belongs to the prokaryotic AdoMetDC family. Type 1 subfamily. As to quaternary structure, heterotetramer of two alpha and two beta chains arranged as a dimer of alpha/beta heterodimers. Pyruvate is required as a cofactor. In terms of processing, is synthesized initially as an inactive proenzyme. Formation of the active enzyme involves a self-maturation process in which the active site pyruvoyl group is generated from an internal serine residue via an autocatalytic post-translational modification. Two non-identical subunits are generated from the proenzyme in this reaction, and the pyruvate is formed at the N-terminus of the alpha chain, which is derived from the carboxyl end of the proenzyme. The post-translation cleavage follows an unusual pathway, termed non-hydrolytic serinolysis, in which the side chain hydroxyl group of the serine supplies its oxygen atom to form the C-terminus of the beta chain, while the remainder of the serine residue undergoes an oxidative deamination to produce ammonia and the pyruvoyl group blocking the N-terminus of the alpha chain.

It catalyses the reaction S-adenosyl-L-methionine + H(+) = S-adenosyl 3-(methylsulfanyl)propylamine + CO2. It functions in the pathway amine and polyamine biosynthesis; S-adenosylmethioninamine biosynthesis; S-adenosylmethioninamine from S-adenosyl-L-methionine: step 1/1. In terms of biological role, catalyzes the decarboxylation of S-adenosylmethionine to S-adenosylmethioninamine (dcAdoMet), the propylamine donor required for the synthesis of the polyamines spermine and spermidine from the diamine putrescine. The protein is S-adenosylmethionine decarboxylase proenzyme of Picrophilus torridus (strain ATCC 700027 / DSM 9790 / JCM 10055 / NBRC 100828 / KAW 2/3).